Consider the following 475-residue polypeptide: UDP-N-acetylmuramate--L-alanine ligase (475 aa).

121-127 contacts ATP; it reads GTHGKTT.

The protein belongs to the MurCDEF family.

The protein resides in the cytoplasm. The catalysed reaction is UDP-N-acetyl-alpha-D-muramate + L-alanine + ATP = UDP-N-acetyl-alpha-D-muramoyl-L-alanine + ADP + phosphate + H(+). It functions in the pathway cell wall biogenesis; peptidoglycan biosynthesis. Cell wall formation. The polypeptide is UDP-N-acetylmuramate--L-alanine ligase (Salinibacter ruber (strain DSM 13855 / M31)).